We begin with the raw amino-acid sequence, 320 residues long: UDP-N-acetylenolpyruvoylglucosamine reductase (320 aa).

An FAD-binding PCMH-type domain is found at 35-216 (RAGGPAQVLF…KQAMDEVQHH (182 aa)). Residue Arg-181 is part of the active site. The Proton donor role is filled by Ser-230. Glu-300 is a catalytic residue.

The protein belongs to the MurB family. The cofactor is FAD.

The protein resides in the cytoplasm. It carries out the reaction UDP-N-acetyl-alpha-D-muramate + NADP(+) = UDP-N-acetyl-3-O-(1-carboxyvinyl)-alpha-D-glucosamine + NADPH + H(+). Its pathway is cell wall biogenesis; peptidoglycan biosynthesis. Cell wall formation. The sequence is that of UDP-N-acetylenolpyruvoylglucosamine reductase from Brucella anthropi (strain ATCC 49188 / DSM 6882 / CCUG 24695 / JCM 21032 / LMG 3331 / NBRC 15819 / NCTC 12168 / Alc 37) (Ochrobactrum anthropi).